We begin with the raw amino-acid sequence, 500 residues long: Glycerol kinase (500 aa).

Residue Thr-12 coordinates ADP. The ATP site is built by Thr-12, Thr-13, and Ser-14. Thr-12 provides a ligand contact to sn-glycerol 3-phosphate. Arg-16 is an ADP binding site. Sn-glycerol 3-phosphate contacts are provided by Arg-82, Glu-83, Tyr-134, and Asp-243. Glycerol is bound by residues Arg-82, Glu-83, Tyr-134, Asp-243, and Gln-244. ADP is bound by residues Thr-265 and Gly-308. ATP-binding residues include Thr-265, Gly-308, Gln-312, and Gly-411. Residue Gly-411 coordinates ADP.

The protein belongs to the FGGY kinase family.

It carries out the reaction glycerol + ATP = sn-glycerol 3-phosphate + ADP + H(+). Its pathway is polyol metabolism; glycerol degradation via glycerol kinase pathway; sn-glycerol 3-phosphate from glycerol: step 1/1. Inhibited by fructose 1,6-bisphosphate (FBP). Functionally, key enzyme in the regulation of glycerol uptake and metabolism. Catalyzes the phosphorylation of glycerol to yield sn-glycerol 3-phosphate. The polypeptide is Glycerol kinase (Chelativorans sp. (strain BNC1)).